We begin with the raw amino-acid sequence, 135 residues long: Kappa-casein (135 aa).

The O-linked (GalNAc...) threonine glycan is linked to Thr96. Phosphoserine; alternate is present on Ser114. O-linked (GalNAc...) serine; alternate glycosylation is present at Ser114. Thr131 is a glycosylation site (O-linked (GalNAc...) threonine). Ser132 carries the post-translational modification Phosphoserine.

Belongs to the kappa-casein family. As to expression, mammary gland specific. Secreted in milk.

Its subcellular location is the secreted. Kappa-casein stabilizes micelle formation, preventing casein precipitation in milk. In Equus grevyi (Grevy's zebra), this protein is Kappa-casein (CSN3).